We begin with the raw amino-acid sequence, 199 residues long: MAETQNLLLFRKWDLSDIEVVDPGLKTAISLRKMTLPYTYGRSALKRFNKADANIVERLANKMMHFGKKYAKNTGRMAGKKMGSINTVKTAFEIINLKTGRNPVEVLVRAVENSAPNEDTTRIVYGGTVYHVSVDVSPLRRVDLALRFIADGVKEAAFRKPKSLEEFLAEHLILAANNTTDAPSVKKKNELERIAQASR.

It belongs to the universal ribosomal protein uS7 family. As to quaternary structure, part of the 30S ribosomal subunit.

One of the primary rRNA binding proteins, it binds directly to 16S rRNA where it nucleates assembly of the head domain of the 30S subunit. Is located at the subunit interface close to the decoding center. This Cenarchaeum symbiosum (strain A) protein is Small ribosomal subunit protein uS7.